The following is a 4981-amino-acid chain: Protocadherin Fat 4 (4981 aa).

Positions 1-38 (MDLAPDRATGRPWLPLHTLSVSQLLRVFWLLSLLPGQA) are cleaved as a signal peptide. Residues 39–4504 (WVHGAEPRQV…PEEISLPLWA (4466 aa)) are Extracellular-facing. 34 Cadherin domains span residues 43–135 (AEPR…APVF), 136–250 (PDPS…PPVF), 251–353 (GSSH…DPVV), 359–475 (PATS…PPVF), 476–582 (SQQV…KPVF), 584–689 (QPEG…SPVF), 690–793 (YPVQ…PPVF), 794–893 (SQVA…SPHF), 894–996 (LQAI…SPVF), 997–1100 (DQLS…RPLF), 1101–1210 (NSTN…APKF), 1211–1315 (LKDF…TPSF), 1316–1420 (PKST…PPSF), 1421–1529 (PPGD…VPMF), 1529–1629 (FISQ…GPVF), 1630–1740 (TQPK…PPVF), 1741–1841 (PTDM…TPKF), 1842–1944 (SRPV…PPIF), 1945–2051 (SLNS…PPTF), 2051–2154 (FLSP…NPIF), 2155–2259 (AQAL…VPVF), 2260–2364 (ELSP…VPTF), 2365–2466 (ASKA…PPRF), 2467–2567 (QHHP…FPKV), 2568–2669 (RAKE…APIF), 2670–2773 (KEDP…APRF), 2773–2872 (FSQI…APRF), 2873–2983 (SRTS…APQF), 2984–3089 (LKSK…TPEF), 3090–3194 (SQSH…SPVF), 3195–3298 (LSDD…VPRF), 3299–3404 (VSKL…PPIF), 3405–3510 (TLNI…GPML), and 3509–3620 (MLTV…VEIF). N-linked (GlcNAc...) asparagine glycosylation is found at N84 and N237. Residues N393, N416, N435, N483, N551, N615, N676, N721, N825, N880, N946, N1085, N1101, N1104, N1225, N1296, N1389, and N1514 are each glycosylated (N-linked (GlcNAc...) asparagine). 4 N-linked (GlcNAc...) asparagine glycosylation sites follow: N1828, N1899, N1967, and N2119. N-linked (GlcNAc...) asparagine glycans are attached at residues N2387 and N2430. 7 N-linked (GlcNAc...) asparagine glycosylation sites follow: N2921, N2937, N3036, N3140, N3217, N3392, and N3477. N3706 and N3758 each carry an N-linked (GlcNAc...) asparagine glycan. Positions 3802–3860 (DHDSCVHGPCQNGGSCLRRLAVSSVLKSRESLPVIIVANEPLQPFLCKCLPGYAGSWCE) constitute an EGF-like 1 domain. 12 cysteine pairs are disulfide-bonded: C3806–C3817, C3811–C3848, C3850–C3859, C3866–C3877, C3871–C3886, C3888–C3897, C3904–C3915, C3909–C3924, C3926–C3935, C3942–C3953, C3947–C3962, and C3964–C3973. An EGF-like 2; calcium-binding domain is found at 3862 to 3898 (DIDECLPSPCHSGGTCHNLVGGFSCSCPDGFTGRACE). The 37-residue stretch at 3900–3936 (DINECLQSPCKNGAICQNFPGSFNCVCKTGYTGKMCE) folds into the EGF-like 3; calcium-binding domain. Residues 3938 to 3974 (SVNYCECNPCFNGGSCQSGVDSYYCHCPFGVFGKHCE) enclose the EGF-like 4 domain. The Laminin G-like 1 domain occupies 3975-4159 (LNSYGFEELS…LAAQGILDQC (185 aa)). N4017 is a glycosylation site (N-linked (GlcNAc...) asparagine). Intrachain disulfides connect C4133/C4159, C4166/C4177, C4171/C4186, and C4188/C4197. The EGF-like 5 domain occupies 4162-4198 (LEGACTRSPCQHGGTCMDYWSWQQCHCKEGLTGKYCE). The 182-residue stretch at 4217–4398 (YHMSQNEKRE…KTDPSVKIGC (182 aa)) folds into the Laminin G-like 2 domain. N-linked (GlcNAc...) asparagine glycosylation is found at N4267 and N4312. 4 disulfides stabilise this stretch: C4365-C4398, C4430-C4441, C4435-C4451, and C4453-C4462. The region spanning 4426 to 4463 (PPGDCASHPCQNGGSCEPGLHSGFTCSCPDSHTGRTCE) is the EGF-like 6 domain. The helical transmembrane segment at 4505–4525 (VPAIVGSCATVLALLVLSLIL) threads the bilayer. Residues 4526-4981 (CNQCRGKKAK…PKDGEAEQYV (456 aa)) lie on the Cytoplasmic side of the membrane. Disordered stretches follow at residues 4534–4584 (AKNP…PDII), 4680–4713 (QGLR…STFY), 4752–4856 (RSKS…MEYD), 4869–4911 (KLSQ…AAPG), and 4957–4981 (AAAN…EQYV). The span at 4680–4699 (QGLRTSSLSHSACPTPNPLS) shows a compositional bias: polar residues. Residues 4706 to 4795 (FSKSSTFYRN…GLSIEEVERL (90 aa)) form a necessary and sufficient for interaction with MPDZ region. Residues 4809–4821 (DHGRSSSEEDCRR) are compositionally biased toward basic and acidic residues. A Phosphoserine modification is found at S4876. Residues 4971 to 4981 (VPKDGEAEQYV) are compositionally biased toward basic and acidic residues.

Heterophilic interaction with DCHS1; this interaction affects their respective protein levels. Interacts (via cytoplasmic domain) with MPDZ. Forms a complex with PALS1 and MPDZ. Widely expressed. Expressed in fetal brain, infant brain, brain tumor and colorectal cancer.

The protein localises to the membrane. Functionally, cadherins are calcium-dependent cell adhesion proteins. FAT4 plays a role in the maintenance of planar cell polarity as well as in inhibition of YAP1-mediated neuroprogenitor cell proliferation and differentiation. The sequence is that of Protocadherin Fat 4 (FAT4) from Homo sapiens (Human).